Reading from the N-terminus, the 423-residue chain is G-protein coupled receptor 83 (423 aa).

Residues Met1 to Ala16 form the signal peptide. At Glu18–Lys71 the chain is on the extracellular side. Residues Asn37 and Asn46 are each glycosylated (N-linked (GlcNAc...) asparagine). A helical membrane pass occupies residues Ala72 to Val92. The Cytoplasmic portion of the chain corresponds to Cys93–Ser107. A helical membrane pass occupies residues Leu108–Leu129. The Extracellular portion of the chain corresponds to Val130–His145. Residue Asn134 is glycosylated (N-linked (GlcNAc...) asparagine). An intrachain disulfide couples Cys144 to Cys224. A helical membrane pass occupies residues Val146–Val167. Residues Asp168–Gly186 are Cytoplasmic-facing. The chain crosses the membrane as a helical span at residues Val187–Gln208. Residues Lys209–Tyr238 are Extracellular-facing. Residues Leu239–Ala260 traverse the membrane as a helical segment. Topologically, residues Arg261–Met293 are cytoplasmic. Residues Leu294–Leu315 traverse the membrane as a helical segment. Over Ser316–Tyr327 the chain is Extracellular. A helical membrane pass occupies residues Phe328–Leu348. The Cytoplasmic segment spans residues Asn349–Ser423. Residues Pro402–Ser414 show a composition bias toward polar residues. A disordered region spans residues Pro402 to Ser423.

It belongs to the G-protein coupled receptor 1 family. In terms of tissue distribution, highly expressed in the brain and spinal cord, and found in lower concentrations in the thymus and other tissues.

Its subcellular location is the cell membrane. Its function is as follows. G-protein coupled receptor for PEN, a neuropeptide produced from the precursor protein, proSAAS (encoded by PCSK1N). Acts through a G(i)- and G(q)-alpha-alpha-mediated pathway in response to PEN. Plays a role in food intake and body weight regulation. May contribute to the regulation of anxiety-related behaviors. The protein is G-protein coupled receptor 83 of Homo sapiens (Human).